The chain runs to 745 residues: Poly(A) polymerase alpha (745 aa).

Over residues 1–17 the composition is skewed to low complexity; the sequence is MPFPVTTQGSQQTQPPQ. The interval 1–22 is disordered; that stretch reads MPFPVTTQGSQQTQPPQKHYGI. Phosphoserine is present on residues Ser-10 and Ser-24. Residues 100-102, Thr-109, 113-115, Asp-167, Lys-228, Tyr-237, and 246-247 contribute to the ATP site; these read FGS, DID, and GV. Residues Asp-113, Asp-115, and Asp-167 each contribute to the Mg(2+) site. Glycyl lysine isopeptide (Lys-Gly) (interchain with G-Cter in SUMO) cross-links involve residues Lys-444, Lys-445, Lys-506, and Lys-507. Positions 490 to 507 match the Nuclear localization signal 1 motif; sequence RKQLHQLLPNHVLQKKKK. A ser/Thr-rich region spans residues 508–643; it reads HSTEGVKLTA…TSGNAATKIP (136 aa). Low complexity predominate over residues 523–534; the sequence is LDLSMDSDNSMS. Disordered stretches follow at residues 523 to 565 and 577 to 704; these read LDLS…AVTA and SVPQ…SETI. Residues 535 to 557 show a composition bias toward polar residues; that stretch reads VPSPTSATKTSPLNSSGSSQGRN. Phosphoserine occurs at positions 537 and 558. Low complexity-rich tracts occupy residues 583–594 and 611–640; these read SSESSGGTSSES and TVSRVVSSTRLVNPPPRSSGNAATSGNAAT. N6-acetyllysine occurs at positions 641 and 650. Positions 650–665 match the Nuclear localization signal 2 motif; it reads KRTSSPHKEESPKKTK. Composition is skewed to basic and acidic residues over residues 655 to 666 and 682 to 692; these read PHKEESPKKTKT and GHDKTEAKEQL. The interval 677 to 745 is required for interaction with NUDT21; it reads CLALSGHDKT…KNSIKLRLNR (69 aa). Over residues 694–704 the composition is skewed to low complexity; it reads TETSTTQSETI. At Lys-736 the chain carries N6-acetyllysine; alternate. Lys-736 is covalently cross-linked (Glycyl lysine isopeptide (Lys-Gly) (interchain with G-Cter in SUMO); alternate). At Ser-738 the chain carries Phosphoserine. N6-acetyllysine; alternate is present on Lys-740. A Glycyl lysine isopeptide (Lys-Gly) (interchain with G-Cter in SUMO); alternate cross-link involves residue Lys-740.

It belongs to the poly(A) polymerase family. Monomer. Found in a complex with CPSF1, FIP1L1 and PAPOLA. Interacts with AHCYL1 and FIP1L1; the interaction with AHCYL1 seems to increase interaction with FIP1L1. Interacts with NUDT21; the interaction is diminished by acetylation. Interacts with KPNB1; the interaction promotes PAP nuclear import and is inhibited by acetylation of PAP. The cofactor is Mg(2+). Mn(2+) serves as cofactor. In terms of processing, polysumoylated. Varying sumoylation depending on tissue- and cell-type. Highly sumoylated in bladder and NIH 3T3 cells. Sumoylation is required for nuclear localization and enhances PAP stability. Desumoylated by SENP1. Inhibits polymerase activity. Post-translationally, hyperphosphorylation on multiple CDK2 consensus and non-consensus sites in the C-terminal Ser/Thr-rich region represses PAP activity in late M-phase. Phosphorylation/dephosphorylation may regulate the interaction between PAP and CPSF. Acetylated in the C-terminus. Acetylation decreases interaction with NUDT21 and KPNB1, and inhibits nuclear localization through inhibiting binding to the importin alpha/beta complex.

The protein localises to the cytoplasm. Its subcellular location is the nucleus. It catalyses the reaction RNA(n) + ATP = RNA(n)-3'-adenine ribonucleotide + diphosphate. In terms of biological role, polymerase that creates the 3'-poly(A) tail of mRNA's. Also required for the endoribonucleolytic cleavage reaction at some polyadenylation sites. May acquire specificity through interaction with a cleavage and polyadenylation specificity factor (CPSF) at its C-terminus. This Homo sapiens (Human) protein is Poly(A) polymerase alpha (PAPOLA).